The sequence spans 578 residues: Zinc finger-containing ubiquitin peptidase 1 (578 aa).

The segment at 2-24 (LSCDICGETVTSEPDMKAHLIVH) adopts a C2H2-type 1 zinc-finger fold. The segment at 29-52 (IVCPFCKLSGVSYDEMCFHIETAH) adopts a C2H2-type 2; atypical zinc-finger fold. C2H2-type zinc fingers lie at residues 154–177 (PECPFCGKIEEHSEDMETHVKTTH) and 193–215 (YDCPMCGLICTNYHILQEHVDLH). Residues 226–248 (DRVQCSGDLQLAHQLQQEEDRKR) are MIU. Residues 249–274 (RSEESRQEIEEFQKLQRQYGLDNSGG) form a zUBD/ZHA region. An N6-acetyllysine modification is found at Lys-262. Catalysis depends on Cys-360, which acts as the Nucleophile. The active-site Proton acceptor is the His-491. The active site involves Asp-512.

It belongs to the peptidase C78 family. ZUFSP subfamily. In terms of assembly, interacts with RPA1 and RPA2.

It localises to the cytoplasm. The protein resides in the nucleus. The enzyme catalyses Thiol-dependent hydrolysis of ester, thioester, amide, peptide and isopeptide bonds formed by the C-terminal Gly of ubiquitin (a 76-residue protein attached to proteins as an intracellular targeting signal).. Functionally, deubiquitinase with endodeubiquitinase activity that specifically interacts with and cleaves 'Lys-63'-linked long polyubiquitin chains. Shows only weak activity against 'Lys-11' and 'Lys-48'-linked chains. Plays an important role in genome stability pathways, functioning to prevent spontaneous DNA damage and also promote cellular survival in response to exogenous DNA damage. Modulates the ubiquitination status of replication protein A (RPA) complex proteins in response to replication stress. In Macaca fascicularis (Crab-eating macaque), this protein is Zinc finger-containing ubiquitin peptidase 1.